We begin with the raw amino-acid sequence, 61 residues long: Small ribosomal subunit protein uS14 (61 aa).

4 residues coordinate Zn(2+): C24, C27, C40, and C43.

It belongs to the universal ribosomal protein uS14 family. Zinc-binding uS14 subfamily. Part of the 30S ribosomal subunit. Contacts proteins S3 and S10. It depends on Zn(2+) as a cofactor.

Functionally, binds 16S rRNA, required for the assembly of 30S particles and may also be responsible for determining the conformation of the 16S rRNA at the A site. The protein is Small ribosomal subunit protein uS14 of Streptococcus pyogenes serotype M49 (strain NZ131).